The following is a 319-amino-acid chain: GPI-specific phospholipase A2-like PGAP3 (319 aa).

Positions M1 to G23 are cleaved as a signal peptide. The Lumenal portion of the chain corresponds to D24–C101. N40 carries an N-linked (GlcNAc...) asparagine glycan. Residues F102–L122 form a helical membrane-spanning segment. At C123 to M135 the chain is on the cytoplasmic side. A helical transmembrane segment spans residues Y136–F156. Over H157–Y169 the chain is Lumenal. The chain crosses the membrane as a helical span at residues F170–L190. Residues Q191 to R200 lie on the Cytoplasmic side of the membrane. Residues A201–Y221 form a helical membrane-spanning segment. The Lumenal portion of the chain corresponds to G222–N224. A helical membrane pass occupies residues M225–W245. Residues N246 to A257 are Cytoplasmic-facing. The chain crosses the membrane as a helical span at residues V258 to W278. Topologically, residues V279–D281 are lumenal. Residues A282–E302 traverse the membrane as a helical segment. The Cytoplasmic portion of the chain corresponds to D303 to D319.

It belongs to the PGAP3 family.

The protein localises to the golgi apparatus membrane. Its function is as follows. Involved in the fatty acid remodeling steps of GPI-anchor maturation where the unsaturated acyl chain at sn-2 of inositol phosphate is replaced by a saturated stearoyl chain. May catalyze the first step of the fatty acid remodeling, by removing the unsaturated acyl chain at sn-2 of inositol phosphate, generating a lyso-GPI intermediate. The fatty acid remodeling steps is critical for the integration of GPI-APs into lipid rafts. This chain is GPI-specific phospholipase A2-like PGAP3, found in Bos taurus (Bovine).